Consider the following 394-residue polypeptide: Guanine nucleotide-binding protein G(s) subunit alpha isoforms short (394 aa).

Residues 1–23 (MGCLGNSKTEDQRNEEKAQREAN) are disordered. Gly-2 carries N-palmitoyl glycine lipidation. Cys-3 carries S-palmitoyl cysteine lipidation. Over residues 8 to 23 (KTEDQRNEEKAQREAN) the composition is skewed to basic and acidic residues. The region spanning 39 to 394 (ATHRLLLLGA…RMHLRQYELL (356 aa)) is the G-alpha domain. The G1 motif stretch occupies residues 42–55 (RLLLLGAGESGKST). 47 to 55 (GAGESGKST) lines the GTP pocket. Ser-54 is a Mg(2+) binding site. Positions 68–90 (FNGEGGEEDPQAARSNSDGEKAT) are disordered. The tract at residues 196–204 (DLLRCRVLT) is G2 motif. GTP contacts are provided by residues 197–204 (LLRCRVLT), 223–227 (DVGGQ), and 292–295 (NKQD). Position 204 (Thr-204) interacts with Mg(2+). Positions 219–228 (FHMFDVGGQR) are G3 motif. The interval 288–295 (ILFLNKQD) is G4 motif. Lys-300 is covalently cross-linked (Glycyl lysine isopeptide (Lys-Gly) (interchain with G-Cter in ubiquitin)). Phosphoserine is present on Ser-352. The segment at 364–369 (TCAVDT) is G5 motif. Position 366 (Ala-366) interacts with GTP.

Belongs to the G-alpha family. G(s) subfamily. Heterotrimeric G proteins are composed of 3 units; alpha, beta and gamma. The alpha chain contains the guanine nucleotide binding site. Component of the TAS2R14-GNAS2 complex, consisting of TAS2R14, GNAS2, GNB1 and GNG2; within the complex interacts with TAS2R14; this complex plays a role in the perception of bitterness. Interacts with CRY1; the interaction may block GPCR-mediated regulation of cAMP concentrations. Interacts with ADCY6 and stimulates its adenylyl cyclase activity. Interacts with ADCY2 and ADCY5. Interacts (GDP-bound form) with RIC8B; promoting GNAS folding and association with the plasma membrane. Stimulates the ADCY5 adenylyl cyclase activity. Interaction with SASH1. Interacts with GASL2L2.

It is found in the cell membrane. It carries out the reaction GTP + H2O = GDP + phosphate + H(+). Its function is as follows. Guanine nucleotide-binding proteins (G proteins) function as transducers in numerous signaling pathways controlled by G protein-coupled receptors (GPCRs). The alpha chain contains the guanine nucleotide binding site and alternates between an active, GTP-bound state and an inactive, GDP-bound state. Signaling by an activated GPCR promotes GDP release and GTP binding. The alpha subunit has a low GTPase activity that converts bound GTP to GDP, thereby terminating the signal. Both GDP release and GTP hydrolysis are modulated by numerous regulatory proteins. Signaling involves the activation of adenylyl cyclases, resulting in increased levels of the signaling molecule cAMP. Functions downstream of beta-adrenergic receptors. Stimulates the Ras signaling pathway via RAPGEF2. The protein is Guanine nucleotide-binding protein G(s) subunit alpha isoforms short (Gnas) of Mus musculus (Mouse).